A 260-amino-acid chain; its full sequence is NAD-capped RNA hydrolase NudC (260 aa).

Arginine 69 provides a ligand contact to substrate. Residues cysteine 98 and cysteine 101 each contribute to the Zn(2+) site. Glutamate 111 provides a ligand contact to substrate. Zn(2+) is bound by residues cysteine 116 and cysteine 119. Tyrosine 124 lines the substrate pocket. Positions 125–248 constitute a Nudix hydrolase domain; it reads PQIAPCIIVA…TVARRLIEDT (124 aa). A divalent metal cation contacts are provided by alanine 158, glutamate 174, and glutamate 178. Positions 159 to 180 match the Nudix box motif; that stretch reads GFVEVGETLEQTVVREVMEESQ. 192–199 is a substrate binding site; it reads QPWPFPHS. Glutamate 219 provides a ligand contact to a divalent metal cation. Alanine 241 is a substrate binding site.

It belongs to the Nudix hydrolase family. NudC subfamily. As to quaternary structure, homodimer. Requires Mg(2+) as cofactor. The cofactor is Mn(2+). Zn(2+) is required as a cofactor.

It catalyses the reaction a 5'-end NAD(+)-phospho-ribonucleoside in mRNA + H2O = a 5'-end phospho-adenosine-phospho-ribonucleoside in mRNA + beta-nicotinamide D-ribonucleotide + 2 H(+). The catalysed reaction is NAD(+) + H2O = beta-nicotinamide D-ribonucleotide + AMP + 2 H(+). The enzyme catalyses NADH + H2O = reduced beta-nicotinamide D-ribonucleotide + AMP + 2 H(+). In terms of biological role, mRNA decapping enzyme that specifically removes the nicotinamide adenine dinucleotide (NAD) cap from a subset of mRNAs by hydrolyzing the diphosphate linkage to produce nicotinamide mononucleotide (NMN) and 5' monophosphate mRNA. The NAD-cap is present at the 5'-end of some mRNAs and stabilizes RNA against 5'-processing. Has preference for mRNAs with a 5'-end purine. Catalyzes the hydrolysis of a broad range of dinucleotide pyrophosphates. The protein is NAD-capped RNA hydrolase NudC of Pectobacterium atrosepticum (strain SCRI 1043 / ATCC BAA-672) (Erwinia carotovora subsp. atroseptica).